Consider the following 375-residue polypeptide: Chaperone protein DnaJ (375 aa).

The J domain occupies 5–70 (GYYEVLGVSK…QKRQAYDQFG (66 aa)). The segment at 142-220 (GKEYKIEIPR…CKGEGLTEKR (79 aa)) adopts a CR-type zinc-finger fold. Zn(2+) contacts are provided by cysteine 155, cysteine 158, cysteine 172, cysteine 175, cysteine 194, cysteine 197, cysteine 208, and cysteine 211. CXXCXGXG motif repeat units follow at residues 155-162 (CVDCTGSG), 172-179 (CPDCSGTG), 194-201 (CPRCKGKG), and 208-215 (CKTCKGEG).

Belongs to the DnaJ family. In terms of assembly, homodimer. It depends on Zn(2+) as a cofactor.

Its subcellular location is the cytoplasm. In terms of biological role, participates actively in the response to hyperosmotic and heat shock by preventing the aggregation of stress-denatured proteins and by disaggregating proteins, also in an autonomous, DnaK-independent fashion. Unfolded proteins bind initially to DnaJ; upon interaction with the DnaJ-bound protein, DnaK hydrolyzes its bound ATP, resulting in the formation of a stable complex. GrpE releases ADP from DnaK; ATP binding to DnaK triggers the release of the substrate protein, thus completing the reaction cycle. Several rounds of ATP-dependent interactions between DnaJ, DnaK and GrpE are required for fully efficient folding. Also involved, together with DnaK and GrpE, in the DNA replication of plasmids through activation of initiation proteins. This is Chaperone protein DnaJ from Leptospira biflexa serovar Patoc (strain Patoc 1 / Ames).